Here is a 587-residue protein sequence, read N- to C-terminus: Heavy metal-associated isoprenylated plant protein 33 (587 aa).

One can recognise an HMA domain in the interval 9–72 (IQTCVLKVNI…KLLKSGKHAE (64 aa)). 2 residues coordinate a metal cation: C20 and C23. Disordered stretches follow at residues 98–146 (QIDH…MVIP), 176–261 (LKLP…KPMM), 287–449 (AHKN…PMSN), 462–504 (PGGG…QQQQ), and 532–587 (YARP…CNIM). 2 stretches are compositionally biased toward gly residues: residues 104-113 (KGGGGGGGGP) and 121-140 (KIGGGGGGGGGGGGGGGGGP). Residues 194 to 208 (PMNKNPQMPNNPNQK) are compositionally biased toward low complexity. Residues 215–248 (PDDDDEEDFSDEFDDEFDEDDDEFDDDLEDDEFD) are compositionally biased toward acidic residues. Gly residues-rich tracts occupy residues 290–300 (NGGGPGPAGGK), 312–419 (MGGG…GGGP), and 428–445 (GAMGGPMGSLPQMGGGPG). The span at 471-483 (SAEAPPGYFQGQV) shows a compositional bias: low complexity. Composition is skewed to pro residues over residues 534–547 (RPPPAVNYMPPQPQ) and 554–565 (YPYPYPYPPQYP). Over residues 578–587 (DENTSSCNIM) the composition is skewed to polar residues. Cysteine methyl ester is present on C584. C584 carries the S-farnesyl cysteine lipid modification. A propeptide spans 585–587 (NIM) (removed in mature form).

Belongs to the HIPP family.

Heavy-metal-binding protein. This chain is Heavy metal-associated isoprenylated plant protein 33, found in Arabidopsis thaliana (Mouse-ear cress).